Consider the following 341-residue polypeptide: MSSAAMLTAEDSLEPTLQNLLDQKTLRWVFVGGKGGVGKTTTSCSLAIQLAKVRKSVLLISTDPAHNLSDAFGQKFGKEARLIDGFTNLSAMEIDPNGSIQDLLAASGGQGDDSMGGLGIGGMMQDLAFSIPGVDEAMSFAEVLKQVKSLSYEVIIFDTAPTGHTLRFLQFPTVLEKALAKLAQLSTQFGPMLNSILGGRGGLPGGQNLDEILSKMESLRETIAEVNAQFKDADLTTFVCVCIAEFLSLYETERMIQELTSYHIDTHCIVVNQLLFPGKDSSCEQCKARRKMQKKYLNEIEELYEDFNVVRMPMLVEEVRGKEKLEKFSDMLVHPYVPPQE.

34–41 (KGGVGKTT) lines the ATP pocket. Residue Asp-63 is part of the active site. ATP contacts are provided by Glu-245 and Asn-272. The Zn(2+) site is built by Cys-283 and Cys-286.

The protein belongs to the arsA ATPase family. In terms of assembly, homodimer.

It localises to the cytoplasm. The protein resides in the endoplasmic reticulum. Its function is as follows. ATPase required for the post-translational delivery of tail-anchored (TA) proteins to the endoplasmic reticulum. Recognizes and selectively binds the transmembrane domain of TA proteins in the cytosol. This complex then targets to the endoplasmic reticulum by membrane-bound receptors, where the tail-anchored protein is released for insertion. This process is regulated by ATP binding and hydrolysis. ATP binding drives the homodimer towards the closed dimer state, facilitating recognition of newly synthesized TA membrane proteins. ATP hydrolysis is required for insertion. Subsequently, the homodimer reverts towards the open dimer state, lowering its affinity for the membrane-bound receptor, and returning it to the cytosol to initiate a new round of targeting. In Paracoccidioides lutzii (strain ATCC MYA-826 / Pb01) (Paracoccidioides brasiliensis), this protein is ATPase GET3.